The primary structure comprises 389 residues: Heat-inducible transcription repressor HrcA (389 aa).

Belongs to the HrcA family.

Its function is as follows. Negative regulator of class I heat shock genes (grpE-dnaK-dnaJ and groELS operons). Prevents heat-shock induction of these operons. This chain is Heat-inducible transcription repressor HrcA, found in Synechococcus sp. (strain JA-2-3B'a(2-13)) (Cyanobacteria bacterium Yellowstone B-Prime).